We begin with the raw amino-acid sequence, 210 residues long: Chaperone protein TorD (210 aa).

Belongs to the TorD/DmsD family. TorD subfamily.

It localises to the cytoplasm. Its function is as follows. Involved in the biogenesis of TorA. Acts on TorA before the insertion of the molybdenum cofactor and, as a result, probably favors a conformation of the apoenzyme that is competent for acquiring the cofactor. This chain is Chaperone protein TorD, found in Salmonella dublin (strain CT_02021853).